The sequence spans 544 residues: Chaperonin GroEL 2 (544 aa).

Residues 29 to 32 (TLGP), 86 to 90 (DGTTT), Gly-413, 482 to 484 (NVL), and Asp-498 contribute to the ATP site.

This sequence belongs to the chaperonin (HSP60) family. Forms a cylinder of 14 subunits composed of two heptameric rings stacked back-to-back. Interacts with the co-chaperonin GroES.

It localises to the cytoplasm. The catalysed reaction is ATP + H2O + a folded polypeptide = ADP + phosphate + an unfolded polypeptide.. Functionally, together with its co-chaperonin GroES, plays an essential role in assisting protein folding. The GroEL-GroES system forms a nano-cage that allows encapsulation of the non-native substrate proteins and provides a physical environment optimized to promote and accelerate protein folding. The protein is Chaperonin GroEL 2 of Roseiflexus sp. (strain RS-1).